We begin with the raw amino-acid sequence, 206 residues long: Proteasome subunit beta type-2 (206 aa).

The protein belongs to the peptidase T1B family. In terms of assembly, the 26S proteasome consists of a 20S proteasome core and two 19S regulatory subunits. The 20S proteasome core is composed of 28 subunits that are arranged in four stacked rings, resulting in a barrel-shaped structure. The two end rings are each formed by seven alpha subunits, and the two central rings are each formed by seven beta subunits. The catalytic chamber with the active sites is on the inside of the barrel.

It is found in the cytoplasm. The protein resides in the nucleus. Its function is as follows. Non-catalytic component of the proteasome, a multicatalytic proteinase complex which is characterized by its ability to cleave peptides with Arg, Phe, Tyr, Leu, and Glu adjacent to the leaving group at neutral or slightly basic pH. The proteasome has an ATP-dependent proteolytic activity. The chain is Proteasome subunit beta type-2 (PSB4) from Trypanosoma brucei brucei.